Reading from the N-terminus, the 113-residue chain is Translation initiation factor IF-1, chloroplastic (113 aa).

The 76-residue stretch at 8 to 83 folds into the S1-like domain; the sequence is REKKNPREAK…SKGRIIYRLP (76 aa). Residues 86-113 are disordered; sequence DSKRIEDSKDSEDLKDSEDLKDTKDSKD.

It belongs to the IF-1 family. As to quaternary structure, component of the 30S ribosomal translation pre-initiation complex which assembles on the 30S ribosome in the order IF-2 and IF-3, IF-1 and N-formylmethionyl-tRNA(fMet); mRNA recruitment can occur at any time during PIC assembly.

It is found in the plastid. It localises to the chloroplast. Functionally, one of the essential components for the initiation of protein synthesis. Stabilizes the binding of IF-2 and IF-3 on the 30S subunit to which N-formylmethionyl-tRNA(fMet) subsequently binds. Helps modulate mRNA selection, yielding the 30S pre-initiation complex (PIC). Upon addition of the 50S ribosomal subunit IF-1, IF-2 and IF-3 are released leaving the mature 70S translation initiation complex. In Hordeum vulgare (Barley), this protein is Translation initiation factor IF-1, chloroplastic.